The sequence spans 421 residues: MLSSFFIIADQGDILIEKHWRGLMNRSICEYFWDQVLQSKQNGSSVPPIISTPKYYLINIQKQNVYLLGVCQSEVSPLLVVDFLQRIYDTFVEYFGSNITSATIKENFVHVYQLLDEMADNGFPFTTELNFLKEMIKPPGVLSNVISSVTGTSNITDILPNGSLGAIQWRKTGIKYTQNKIFFDIIEEIDCIIDSNGYIVSSEINGEILCHCNLSGMPDLTMTFNNPRMLDDVSFHPCVRYSRWENDRVLSFIPPDGNFKLLSYRVKGINQFPVYVKPQISYSEGSSSVGRVNVTVGAKGYNVQNKLSIEDVVATIPFSKTTSSTNLTANIGSFGMDEQSKILRWNIGKIPKEKTPFLNGTVSLIAGSMTPESTPSIMLQFKIPQYAISGLTIDSLACSERYKPFKGVKCTTKAGKFQVRS.

The 243-residue stretch at 178-420 folds into the MHD domain; the sequence is QNKIFFDIIE…TTKAGKFQVR (243 aa).

This sequence belongs to the adaptor complexes medium subunit family. Adaptor protein complex 3 (AP-3) is a heterotetramer composed of two large adaptins (delta-type subunit and beta-type subunit), a medium adaptin (mu-type subunit) and a small adaptin (sigma-type subunit).

Its subcellular location is the endosome membrane. Functionally, part of the AP-3 complex, an adaptor-related complex which is essential for the compartmentalization of the endocytic pathway. This is AP-3 complex subunit mu (apm3) from Dictyostelium discoideum (Social amoeba).